Here is a 513-residue protein sequence, read N- to C-terminus: Ectonucleoside triphosphate diphosphohydrolase 1 (513 aa).

At 1 to 16 (MEDRRESELKVFCSKN) the chain is on the cytoplasmic side. A helical membrane pass occupies residues 17–37 (ILSILGFSCIIAVIALLALGL). Over 38–481 (TQNKALPENV…SPPLPHSTYV (444 aa)) the chain is Extracellular. N-linked (GlcNAc...) asparagine glycosylation occurs at N73. E174 serves as the catalytic Proton acceptor. N-linked (GlcNAc...) asparagine glycosylation is found at N227 and N245. 2 cysteine pairs are disulfide-bonded: C255-C300 and C281-C327. 2 N-linked (GlcNAc...) asparagine glycosylation sites follow: N307 and N336. A disulfide bond links C340 and C345. A glycan (N-linked (GlcNAc...) asparagine) is linked at N373. C393 and C416 are joined by a disulfide. An N-linked (GlcNAc...) asparagine glycan is attached at N460. Residues 482–502 (FLMVLFSLILLAVIIVGIVVF) traverse the membrane as a helical segment. The Cytoplasmic portion of the chain corresponds to 503 to 513 (HKPSYFWKDMV).

It belongs to the GDA1/CD39 NTPase family. As to quaternary structure, homodimer; disulfide-linked. The cofactor is Ca(2+). Mg(2+) serves as cofactor. In terms of processing, N-glycosylated. Post-translationally, the N-terminus is blocked. Palmitoylated on Cys-13; which is required for caveola targeting.

The protein resides in the membrane. It localises to the caveola. The enzyme catalyses a ribonucleoside 5'-triphosphate + 2 H2O = a ribonucleoside 5'-phosphate + 2 phosphate + 2 H(+). It catalyses the reaction a ribonucleoside 5'-triphosphate + H2O = a ribonucleoside 5'-diphosphate + phosphate + H(+). The catalysed reaction is a ribonucleoside 5'-diphosphate + H2O = a ribonucleoside 5'-phosphate + phosphate + H(+). It carries out the reaction ATP + 2 H2O = AMP + 2 phosphate + 2 H(+). The enzyme catalyses ATP + H2O = ADP + phosphate + H(+). It catalyses the reaction ADP + H2O = AMP + phosphate + H(+). The catalysed reaction is CTP + 2 H2O = CMP + 2 phosphate + 2 H(+). It carries out the reaction CTP + H2O = CDP + phosphate + H(+). The enzyme catalyses CDP + H2O = CMP + phosphate + H(+). It catalyses the reaction GTP + 2 H2O = GMP + 2 phosphate + 2 H(+). The catalysed reaction is GTP + H2O = GDP + phosphate + H(+). It carries out the reaction GDP + H2O = GMP + phosphate + H(+). The enzyme catalyses ITP + 2 H2O = IMP + 2 phosphate + 2 H(+). It catalyses the reaction ITP + H2O = IDP + phosphate + H(+). The catalysed reaction is IDP + H2O = IMP + phosphate + H(+). It carries out the reaction UTP + 2 H2O = UMP + 2 phosphate + 2 H(+). The enzyme catalyses UTP + H2O = UDP + phosphate + H(+). It catalyses the reaction UDP + H2O = UMP + phosphate + H(+). Catalyzes the hydrolysis of both di- and triphosphate nucleotides (NDPs and NTPs) and hydrolyze NTPs to nucleotide monophosphates (NMPs) in two distinct successive phosphate-releasing steps, with NDPs as intermediates and participates in the regulation of extracellular levels of nucleotides. By hydrolyzing proinflammatory ATP and platelet-activating ADP to AMP, it blocks platelet aggregation and supports blood flow. The polypeptide is Ectonucleoside triphosphate diphosphohydrolase 1 (Bos taurus (Bovine)).